Reading from the N-terminus, the 654-residue chain is Protein fem-1 homolog A-like (654 aa).

7 ANK repeats span residues D2 to L31, G40 to A70, E82 to R111, T115 to V145, H149 to R178, K182 to R211, and Y214 to Q243. A Phosphoserine modification is found at S108. The segment at H241–P265 is disordered. Positions G253–S263 are enriched in polar residues. TPR repeat units follow at residues V283–G317 and S375–N408. ANK repeat units follow at residues N519–S561 and D565–A594. Residue S608 is modified to Phosphoserine.

This sequence belongs to the fem-1 family. As to quaternary structure, component of a CRL2 E3 ubiquitin-protein ligase complex, also named ECS (Elongin BC-CUL2/5-SOCS-box protein) complex, composed of CUL2, Elongin BC (ELOB and ELOC), RBX1 and substrate-specific adapter FEM1A.

The protein resides in the mitochondrion. The protein localises to the cytoplasm. The protein operates within protein modification; protein ubiquitination. In terms of biological role, substrate-recognition component of a Cul2-RING (CRL2) E3 ubiquitin-protein ligase complex of the DesCEND (destruction via C-end degrons) pathway, which recognizes a C-degron located at the extreme C terminus of target proteins, leading to their ubiquitination and degradation. The C-degron recognized by the DesCEND pathway is usually a motif of less than ten residues and can be present in full-length proteins, truncated proteins or proteolytically cleaved forms. The CRL2(FEM1A) complex specifically recognizes proteins with an arginine at the C-terminus: recognizes and binds proteins ending with -Lys/Arg-Xaa-Arg and -Lys/Arg-Xaa-Xaa-Arg C-degrons, such as SIL1 or OR51B2, leading to their ubiquitination and degradation. This is Protein fem-1 homolog A-like from Mus musculus (Mouse).